The primary structure comprises 631 residues: Phosphomethylpyrimidine synthase (631 aa).

Residues Asn-239, Met-268, Tyr-297, His-333, 353-355, 394-397, and Glu-433 contribute to the substrate site; these read SRG and DGLR. His-437 is a binding site for Zn(2+). A substrate-binding site is contributed by Tyr-460. Zn(2+) is bound at residue His-501. Residues Cys-581, Cys-584, and Cys-589 each contribute to the [4Fe-4S] cluster site.

The protein belongs to the ThiC family. In terms of assembly, homodimer. Requires [4Fe-4S] cluster as cofactor.

It carries out the reaction 5-amino-1-(5-phospho-beta-D-ribosyl)imidazole + S-adenosyl-L-methionine = 4-amino-2-methyl-5-(phosphooxymethyl)pyrimidine + CO + 5'-deoxyadenosine + formate + L-methionine + 3 H(+). It participates in cofactor biosynthesis; thiamine diphosphate biosynthesis. Catalyzes the synthesis of the hydroxymethylpyrimidine phosphate (HMP-P) moiety of thiamine from aminoimidazole ribotide (AIR) in a radical S-adenosyl-L-methionine (SAM)-dependent reaction. In Salmonella paratyphi B (strain ATCC BAA-1250 / SPB7), this protein is Phosphomethylpyrimidine synthase.